Here is a 208-residue protein sequence, read N- to C-terminus: Small ribosomal subunit protein uS4 (208 aa).

The S4 RNA-binding domain occupies 98 to 163 (RRLDNVVYRL…KPRFIEIKEK (66 aa)).

This sequence belongs to the universal ribosomal protein uS4 family. In terms of assembly, part of the 30S ribosomal subunit. Contacts protein S5. The interaction surface between S4 and S5 is involved in control of translational fidelity.

In terms of biological role, one of the primary rRNA binding proteins, it binds directly to 16S rRNA where it nucleates assembly of the body of the 30S subunit. Functionally, with S5 and S12 plays an important role in translational accuracy. This is Small ribosomal subunit protein uS4 from Caldicellulosiruptor saccharolyticus (strain ATCC 43494 / DSM 8903 / Tp8T 6331).